Here is an 88-residue protein sequence, read N- to C-terminus: ATP synthase subunit 9, mitochondrial (88 aa).

2 helical membrane passes run isoleucine 8 to phenylalanine 28 and leucine 45 to phenylalanine 72.

It belongs to the ATPase C chain family. In terms of assembly, F-type ATPases have 2 components, CF(1) - the catalytic core - and CF(0) - the membrane proton channel. CF(1) has five subunits: alpha(3), beta(3), gamma(1), delta(1), epsilon(1). CF(0) has three main subunits: a, b and c.

The protein resides in the mitochondrion membrane. The catalysed reaction is ATP + H2O + 4 H(+)(in) = ADP + phosphate + 5 H(+)(out). Functionally, this protein is one of the chains of the nonenzymatic membrane component (F0) of mitochondrial ATPase. This chain is ATP synthase subunit 9, mitochondrial (ATP9), found in Beta vulgaris (Sugar beet).